A 428-amino-acid polypeptide reads, in one-letter code: D-alanine--D-alanine ligase (428 aa).

The ATP-grasp domain occupies 205 to 424 (KVVLDAAGIP…YTELITRLIE (220 aa)). Position 237-299 (237-299 (DAGLTYPLFV…EQGIDGREIE (63 aa))) interacts with ATP. Residues Asp-378, Glu-391, and Asn-393 each coordinate Mg(2+).

The protein belongs to the D-alanine--D-alanine ligase family. Mg(2+) is required as a cofactor. Mn(2+) serves as cofactor.

It localises to the cytoplasm. The enzyme catalyses 2 D-alanine + ATP = D-alanyl-D-alanine + ADP + phosphate + H(+). It functions in the pathway cell wall biogenesis; peptidoglycan biosynthesis. Cell wall formation. The chain is D-alanine--D-alanine ligase from Bifidobacterium longum (strain NCC 2705).